The following is a 366-amino-acid chain: MKFLDEAKVYIRSGDGGAGAVSFRREKFIEFGGPDGGDGGRGGDVWVEAVNGLNTLIDFRFQQHFKATVGTHGMGRNRTGANGEHVTLKVPVGTQIFEEDAETLIVDMVTEGQRFRLAAGGNGGFGNAHFKSATNQAPDWANPGLEGEEKTIWLRLKLIADAGLVGLPNAGKSTFLAAVTRARPKIANYPFTTLHPNLGVATVDEREFILADIPGLIEGAHEGVGIGDRFLGHVERTRVLLHLVSAQEEDVAKAYTTVAHELEAYDGGLEDKPEIVALSQIDVLDEDELKKKLKALQKACSKKPMMISAITGKGMLEVLRALRDVIVENRSYDDETISQRPKKHRHKLEDRPQHENGPEESEEGEE.

An Obg domain is found at 1 to 159 (MKFLDEAKVY…KTIWLRLKLI (159 aa)). The OBG-type G domain maps to 160–327 (ADAGLVGLPN…VLRALRDVIV (168 aa)). GTP contacts are provided by residues 166 to 173 (GLPNAGKS), 191 to 195 (FTTLH), 212 to 215 (DIPG), 279 to 282 (SQID), and 308 to 310 (SAI). Mg(2+) contacts are provided by S173 and T193. Positions 333–366 (DDETISQRPKKHRHKLEDRPQHENGPEESEEGEE) are disordered. Positions 347-357 (KLEDRPQHENG) are enriched in basic and acidic residues.

The protein belongs to the TRAFAC class OBG-HflX-like GTPase superfamily. OBG GTPase family. As to quaternary structure, monomer. Mg(2+) is required as a cofactor.

Its subcellular location is the cytoplasm. In terms of biological role, an essential GTPase which binds GTP, GDP and possibly (p)ppGpp with moderate affinity, with high nucleotide exchange rates and a fairly low GTP hydrolysis rate. Plays a role in control of the cell cycle, stress response, ribosome biogenesis and in those bacteria that undergo differentiation, in morphogenesis control. The protein is GTPase Obg of Allorhizobium ampelinum (strain ATCC BAA-846 / DSM 112012 / S4) (Agrobacterium vitis (strain S4)).